The chain runs to 354 residues: UDP-N-acetylglucosamine--N-acetylmuramyl-(pentapeptide) pyrophosphoryl-undecaprenol N-acetylglucosamine transferase (354 aa).

UDP-N-acetyl-alpha-D-glucosamine-binding positions include Thr-12–Gly-14, Asn-124, Arg-163, Ser-187, Ile-240, and Gln-285.

This sequence belongs to the glycosyltransferase 28 family. MurG subfamily.

The protein localises to the cell inner membrane. It catalyses the reaction di-trans,octa-cis-undecaprenyl diphospho-N-acetyl-alpha-D-muramoyl-L-alanyl-D-glutamyl-meso-2,6-diaminopimeloyl-D-alanyl-D-alanine + UDP-N-acetyl-alpha-D-glucosamine = di-trans,octa-cis-undecaprenyl diphospho-[N-acetyl-alpha-D-glucosaminyl-(1-&gt;4)]-N-acetyl-alpha-D-muramoyl-L-alanyl-D-glutamyl-meso-2,6-diaminopimeloyl-D-alanyl-D-alanine + UDP + H(+). Its pathway is cell wall biogenesis; peptidoglycan biosynthesis. In terms of biological role, cell wall formation. Catalyzes the transfer of a GlcNAc subunit on undecaprenyl-pyrophosphoryl-MurNAc-pentapeptide (lipid intermediate I) to form undecaprenyl-pyrophosphoryl-MurNAc-(pentapeptide)GlcNAc (lipid intermediate II). This Methylococcus capsulatus (strain ATCC 33009 / NCIMB 11132 / Bath) protein is UDP-N-acetylglucosamine--N-acetylmuramyl-(pentapeptide) pyrophosphoryl-undecaprenol N-acetylglucosamine transferase.